The sequence spans 668 residues: Bifunctional polymyxin resistance protein ArnA (668 aa).

The tract at residues 1-307 (MSNKAVVFAY…ELGLVDGSLL (307 aa)) is formyltransferase ArnAFT. The active-site Proton donor; for formyltransferase activity is the histidine 106. (6R)-10-formyltetrahydrofolate-binding positions include arginine 116 and 138 to 142 (VKRAD). The tract at residues 317 to 668 (RRTRVLILGV…IADRAKQEAR (352 aa)) is dehydrogenase ArnADH. NAD(+) is bound by residues aspartate 350 and 371 to 372 (DI). UDP-alpha-D-glucuronate-binding positions include alanine 396, tyrosine 401, and 435 to 436 (TS). Glutamate 437 acts as the Proton acceptor; for decarboxylase activity in catalysis. Residues arginine 463, asparagine 494, 528–537 (RLFDGGEQKR), and tyrosine 615 contribute to the UDP-alpha-D-glucuronate site. Arginine 621 (proton donor; for decarboxylase activity) is an active-site residue.

It in the N-terminal section; belongs to the Fmt family. UDP-L-Ara4N formyltransferase subfamily. The protein in the C-terminal section; belongs to the NAD(P)-dependent epimerase/dehydratase family. UDP-glucuronic acid decarboxylase subfamily. In terms of assembly, homohexamer, formed by a dimer of trimers.

The catalysed reaction is UDP-alpha-D-glucuronate + NAD(+) = UDP-beta-L-threo-pentopyranos-4-ulose + CO2 + NADH. The enzyme catalyses UDP-4-amino-4-deoxy-beta-L-arabinose + (6R)-10-formyltetrahydrofolate = UDP-4-deoxy-4-formamido-beta-L-arabinose + (6S)-5,6,7,8-tetrahydrofolate + H(+). The protein operates within nucleotide-sugar biosynthesis; UDP-4-deoxy-4-formamido-beta-L-arabinose biosynthesis; UDP-4-deoxy-4-formamido-beta-L-arabinose from UDP-alpha-D-glucuronate: step 1/3. Its pathway is nucleotide-sugar biosynthesis; UDP-4-deoxy-4-formamido-beta-L-arabinose biosynthesis; UDP-4-deoxy-4-formamido-beta-L-arabinose from UDP-alpha-D-glucuronate: step 3/3. It participates in bacterial outer membrane biogenesis; lipopolysaccharide biosynthesis. Its function is as follows. Bifunctional enzyme that catalyzes the oxidative decarboxylation of UDP-glucuronic acid (UDP-GlcUA) to UDP-4-keto-arabinose (UDP-Ara4O) and the addition of a formyl group to UDP-4-amino-4-deoxy-L-arabinose (UDP-L-Ara4N) to form UDP-L-4-formamido-arabinose (UDP-L-Ara4FN). The modified arabinose is attached to lipid A and is required for resistance to polymyxin and cationic antimicrobial peptides. In Pseudomonas fluorescens (strain ATCC BAA-477 / NRRL B-23932 / Pf-5), this protein is Bifunctional polymyxin resistance protein ArnA.